Here is a 543-residue protein sequence, read N- to C-terminus: Adenosine deaminase 2 (543 aa).

Positions 1-26 are cleaved as a signal peptide; it reads MFLKFKNIFFIVLTLSIVFNGLIVNS. Residues 31-54 show a composition bias toward low complexity; it reads INNKNNNNNNNNKDLSSSESGSSS. A disordered region spans residues 31–58; sequence INNKNNNNNNNNKDLSSSESGSSSDINP. The N-linked (GlcNAc...) asparagine glycan is linked to Asn-126. Zn(2+)-binding residues include His-144 and His-146. Asn-179 carries an N-linked (GlcNAc...) asparagine glycan. A substrate-binding site is contributed by 232–239; that stretch reads WRKFDGIF. 2 N-linked (GlcNAc...) asparagine glycosylation sites follow: Asn-309 and Asn-326. Gly-355 is a substrate binding site. His-389 provides a ligand contact to Zn(2+). Glu-392 (proton donor) is an active-site residue. N-linked (GlcNAc...) asparagine glycosylation is present at Asn-397. His-414 functions as the Proton acceptor in the catalytic mechanism. Asp-471 serves as a coordination point for Zn(2+). Asp-472 provides a ligand contact to substrate. 2 N-linked (GlcNAc...) asparagine glycosylation sites follow: Asn-508 and Asn-514.

Belongs to the metallo-dependent hydrolases superfamily. Adenosine and AMP deaminases family. ADGF subfamily. The cofactor is Zn(2+).

The protein localises to the secreted. The catalysed reaction is adenosine + H2O + H(+) = inosine + NH4(+). Adenosine deaminase that may contribute to the degradation of extracellular adenosine, a signaling molecule that controls a variety of cellular responses. May play a role in the regulation of cell proliferation. The chain is Adenosine deaminase 2 from Dictyostelium discoideum (Social amoeba).